The following is a 422-amino-acid chain: Growth arrest-specific protein 7 (422 aa).

The disordered stretch occupies residues 1 to 117 (MATALQKPGM…SPGRKQSKEN (117 aa)). The 34-residue stretch at 22 to 55 (VILPPGWHSYLSPQGRRYYVNTTTNETTWERPSS) folds into the WW domain. Residues 41-52 (VNTTTNETTWER) show a composition bias toward polar residues. Positions 53–65 (PSSSPGISASPGP) are enriched in low complexity. 2 positions are modified to phosphoserine: S62 and S108. Over residues 95–117 (RKSTGDSQNLGSSSPGRKQSKEN) the composition is skewed to polar residues. Residues 141–402 (TEWSYCDYFW…LLRKVDPAKD (262 aa)) enclose the F-BAR domain. A coiled-coil region spans residues 254 to 329 (ENFKKDMKKC…RKSTQAGDDL (76 aa)).

The protein localises to the cytoplasm. In terms of biological role, may play a role in promoting maturation and morphological differentiation of cerebellar neurons. The protein is Growth arrest-specific protein 7 (Gas7) of Rattus norvegicus (Rat).